A 68-amino-acid polypeptide reads, in one-letter code: U-reduvitoxin-Pr3a (68 aa).

The signal sequence occupies residues 1-22; that stretch reads MKAGMKLVLVLVIASIALLALA. Cystine bridges form between cysteine 29-cysteine 47, cysteine 36-cysteine 52, and cysteine 46-cysteine 59.

This sequence belongs to the venom Ptu1-like knottin family. As to expression, expressed by the venom gland.

The protein localises to the secreted. Binds reversibly and blocks P/Q-type voltage-gated calcium channels (Cav). The sequence is that of U-reduvitoxin-Pr3a from Platymeris rhadamanthus (Red spot assassin bug).